Here is a 395-residue protein sequence, read N- to C-terminus: F-box/LRR-repeat protein 12 (395 aa).

One can recognise an F-box domain in the interval 13–61; that stretch reads TSIIHLPDDCLSFIFQRLDSVADHDSFGLTCHRWLNIQNISRRSLQFQC. LRR repeat units lie at residues 75–100, 101–126, 127–152, 154–177, 178–203, 226–250, 252–278, 279–304, 305–330, and 331–356; these read NPDV…SLSG, CTVL…YLDC, CFGI…SLYR, NISD…NLSY, CPLV…KISN, SCQL…NISG, SCYI…NLRM, CRTV…NLAL, CHEV…HVNR, and CRNL…YMNG.

This Arabidopsis thaliana (Mouse-ear cress) protein is F-box/LRR-repeat protein 12 (FBL12).